A 91-amino-acid polypeptide reads, in one-letter code: Small ribosomal subunit protein bS18 (91 aa).

It belongs to the bacterial ribosomal protein bS18 family. Part of the 30S ribosomal subunit. Forms a tight heterodimer with protein bS6.

Functionally, binds as a heterodimer with protein bS6 to the central domain of the 16S rRNA, where it helps stabilize the platform of the 30S subunit. The protein is Small ribosomal subunit protein bS18 of Wolbachia pipientis wMel.